Reading from the N-terminus, the 468-residue chain is MAAPDLSTNLQEEATCAICLDYFTDPVMTDCGHNFCRECIRRCWGQPEGPYACPECRELFPQRNLRPNRPLAKMAEMARRLHPPSPVPQGVCAAHREPLAAFCGDELRLLCAACERSGEHWAHRVRPLQDAAEDLKSKLEKSLEHLRKQMEDALLFQAQAEETCSLWQKMVETQRQNVLTEFERLRRLLVEEEQLLLQRLEEEELEVLPPLRESAARLGQQSAQLAELITELEGRCQLPALGLLQDIRDTLRRVQDVKLQPPEVVPMEMRTVCRVPGLVEALRRFRGDMTLDPDTANPELVLSEDRRSVRRGDLRQALPDSPERFDPGPCVLGREPLTSGRHYWEVEVGERASWALGVCRENANRKEKGELFAGNGFWILVFLGSYYNSSERAFAPLRDPPRRVGIFLDYEAGHLSFYSANDGSLLYTFPETPFSGTLRALFSPLSSSPTPMTICRLKGGPGDGLAPQ.

Residues cysteine 16–arginine 57 form an RING-type zinc finger. Serine 85 is modified (phosphoserine). A B box-type zinc finger spans residues valine 87–leucine 128. 4 residues coordinate Zn(2+): cysteine 92, histidine 95, cysteine 114, and histidine 120. A coiled-coil region spans residues leucine 128 to glutamate 233. Positions glutamate 268 to proline 461 constitute a B30.2/SPRY domain. Residue lysine 458 forms a Glycyl lysine isopeptide (Lys-Gly) (interchain with G-Cter in ubiquitin) linkage.

Belongs to the TRIM/RBCC family. As to quaternary structure, binds cytoplasmic tail of integrin alpha-1. Interacts with the HN peptide. Interacts with PHOX2B. Interacts (when autoubiquitinated) with SQSTM1/p62; promoting AIM2 recruitment to autophagosomes. Interacts with AIM2; promoting its autophagy-dependent degradation. In terms of processing, autoubiquitinated upon DNA stimulation; autoubiquitination promotes interaction with SQSTM1/p62 and recruitment of AIM2 to autophagosomes.

The protein localises to the cytoplasm. The protein resides in the nucleus. The enzyme catalyses S-ubiquitinyl-[E2 ubiquitin-conjugating enzyme]-L-cysteine + [acceptor protein]-L-lysine = [E2 ubiquitin-conjugating enzyme]-L-cysteine + N(6)-ubiquitinyl-[acceptor protein]-L-lysine.. It participates in protein modification; protein ubiquitination. E3 ubiquitin-protein ligase that promotes the degradation of insoluble ubiquitinated proteins, including insoluble PAX6, poly-Gln repeat expanded HTT and poly-Ala repeat expanded ARX. Mediates PAX6 ubiquitination leading to proteasomal degradation, thereby modulating cortical neurogenesis. May also inhibit PAX6 transcriptional activity, possibly in part by preventing the binding of PAX6 to its consensus sequences. May contribute to the regulation of the intracellular level of HN (humanin) or HN-containing proteins through the proteasomal degradation pathway. Mediates MED15 ubiquitination leading to proteasomal degradation. May contribute to the innate restriction of retroviruses. Upon overexpression, reduces HIV-1 and murine leukemia virus infectivity, by suppressing viral gene expression. Antiviral activity depends on a functional E3 ubiquitin-protein ligase domain. May regulate TRIM5 turnover via the proteasome pathway, thus counteracting the TRIM5-mediated cross-species restriction of retroviral infection at early stages of the retroviral life cycle. Acts as an inhibitor of the AIM2 inflammasome by promoting autophagy-dependent degradation of AIM2. Mechanistically, undergoes autoubiquitination upon DNA stimulation, promoting interaction with AIM2 and SQSTM1/p62, leading to AIM2 recruitment to autophagosomes. The chain is E3 ubiquitin-protein ligase TRIM11 (TRIM11) from Bos taurus (Bovine).